A 440-amino-acid polypeptide reads, in one-letter code: MKLWGGRFKEEESKLMEDFNSSLSFDKKLYYEDIKGSIAHVKMLTNQNIIKEEEKEKILLGLEEILKEIDEGILKIEGDYEDIHSFVEINLINKIGNVGKKLHTGRSRNDQVALDMKLYAKKSTEEVIECLKELMDSLIKVGNENNYIMPGYTHLQRAQVVTFRYHLLAYFEMFKRDEKRLENALEILNESPLGSGALAGSTYNIDREYTAKLLGFRKPVDNFLDGVSDRDYIIELISKFSIIMMHLSRLSEELILWSSSEFRFIQIGDAYSTGSSIMPQKKNPDGAELIRGKIGRVYGDLISILTVMKSLPLAYNKDMQEDKEPFFDAKDTVISCLKVMEGIISTLKVNKENLMKSVKKGFLNATEAADYLVNKGMAFRDAHKVIGEVVIYCEDKNSAIEDLSLEELKQFSDLFCEDIYEFIDYKNSINKGIKKEMGYF.

It belongs to the lyase 1 family. Argininosuccinate lyase subfamily.

It localises to the cytoplasm. The enzyme catalyses 2-(N(omega)-L-arginino)succinate = fumarate + L-arginine. Its pathway is amino-acid biosynthesis; L-arginine biosynthesis; L-arginine from L-ornithine and carbamoyl phosphate: step 3/3. In Clostridium botulinum (strain Kyoto / Type A2), this protein is Argininosuccinate lyase.